Consider the following 360-residue polypeptide: MFVDSVEIIIASGKGGPGMVSFRREKFVIKGGPDGGDGGDGGDVYFEVDNNTDTLASFRGTKHHKAKNGAPGGTRNCAGKKGEDKIIVVPPGTQVFVGDKLWLDLITPKERVLALKGGKGGLGNAHFKSATKQQPTYAQKGLEGVEKCVRLELKLIADIGLVGFPNAGKSTLISTISNAKPKIANYEFTTLVPNLGVVSVDEKSEFLMADIPGIIEGASQGKGLGISFLKHIERTKVLAFVLDASRLDLGIKEQYQRLRLELEKFSPALANKPFGVLLNKCDVVENIDKMAKDFCAFLNLEAQKLEAFGLEPYLGFLHPHLTSDFENNPNEKSALFVLPLSAVSALNTHALKFVLLEALP.

Positions 1–156 (MFVDSVEIII…KCVRLELKLI (156 aa)) constitute an Obg domain. The 204-residue stretch at 157-360 (ADIGLVGFPN…LKFVLLEALP (204 aa)) folds into the OBG-type G domain. GTP is bound by residues 163-170 (GFPNAGKS), 188-192 (FTTLV), 210-213 (DIPG), 279-282 (NKCD), and 341-343 (SAV). Mg(2+) contacts are provided by S170 and T190.

It belongs to the TRAFAC class OBG-HflX-like GTPase superfamily. OBG GTPase family. In terms of assembly, monomer. Mg(2+) serves as cofactor.

The protein resides in the cytoplasm. An essential GTPase which binds GTP, GDP and possibly (p)ppGpp with moderate affinity, with high nucleotide exchange rates and a fairly low GTP hydrolysis rate. Plays a role in control of the cell cycle, stress response, ribosome biogenesis and in those bacteria that undergo differentiation, in morphogenesis control. The sequence is that of GTPase Obg from Helicobacter pylori (strain HPAG1).